The following is a 609-amino-acid chain: Isocitrate dehydrogenase kinase/phosphatase (609 aa).

ATP contacts are provided by residues 325–331 (APGIKGM) and lysine 346. Aspartate 381 is an active-site residue.

This sequence belongs to the AceK family.

It is found in the cytoplasm. It catalyses the reaction L-seryl-[isocitrate dehydrogenase] + ATP = O-phospho-L-seryl-[isocitrate dehydrogenase] + ADP + H(+). Functionally, bifunctional enzyme which can phosphorylate or dephosphorylate isocitrate dehydrogenase (IDH) on a specific serine residue. This is a regulatory mechanism which enables bacteria to bypass the Krebs cycle via the glyoxylate shunt in response to the source of carbon. When bacteria are grown on glucose, IDH is fully active and unphosphorylated, but when grown on acetate or ethanol, the activity of IDH declines drastically concomitant with its phosphorylation. In Acidovorax sp. (strain JS42), this protein is Isocitrate dehydrogenase kinase/phosphatase.